A 344-amino-acid chain; its full sequence is GTP 3',8-cyclase (344 aa).

In terms of domain architecture, Radical SAM core spans proline 19 to proline 244. Arginine 28 provides a ligand contact to GTP. [4Fe-4S] cluster contacts are provided by cysteine 35 and cysteine 39. Tyrosine 41 lines the S-adenosyl-L-methionine pocket. Cysteine 42 is a binding site for [4Fe-4S] cluster. Residue arginine 77 participates in GTP binding. S-adenosyl-L-methionine is bound at residue glycine 81. Threonine 111 lines the GTP pocket. S-adenosyl-L-methionine is bound at residue serine 135. Lysine 171 contributes to the GTP binding site. S-adenosyl-L-methionine is bound at residue methionine 205. 2 residues coordinate [4Fe-4S] cluster: cysteine 268 and cysteine 271. Arginine 273 to arginine 275 lines the GTP pocket. Cysteine 285 is a [4Fe-4S] cluster binding site.

This sequence belongs to the radical SAM superfamily. MoaA family. As to quaternary structure, monomer and homodimer. It depends on [4Fe-4S] cluster as a cofactor.

The enzyme catalyses GTP + AH2 + S-adenosyl-L-methionine = (8S)-3',8-cyclo-7,8-dihydroguanosine 5'-triphosphate + 5'-deoxyadenosine + L-methionine + A + H(+). It participates in cofactor biosynthesis; molybdopterin biosynthesis. Its function is as follows. Catalyzes the cyclization of GTP to (8S)-3',8-cyclo-7,8-dihydroguanosine 5'-triphosphate. The polypeptide is GTP 3',8-cyclase (Bradyrhizobium diazoefficiens (strain JCM 10833 / BCRC 13528 / IAM 13628 / NBRC 14792 / USDA 110)).